The chain runs to 380 residues: L-lactate dehydrogenase (380 aa).

The 380-residue stretch at methionine 1–arginine 380 folds into the FMN hydroxy acid dehydrogenase domain. Tyrosine 24 is a substrate binding site. Serine 106 and glutamine 127 together coordinate FMN. Tyrosine 129 is a substrate binding site. An FMN-binding site is contributed by threonine 155. Arginine 164 provides a ligand contact to substrate. Lysine 251 serves as a coordination point for FMN. Catalysis depends on histidine 275, which acts as the Proton acceptor. Arginine 278 is a binding site for substrate. Residue aspartate 306–arginine 330 coordinates FMN.

This sequence belongs to the FMN-dependent alpha-hydroxy acid dehydrogenase family. It depends on FMN as a cofactor.

It localises to the cell inner membrane. It carries out the reaction (S)-lactate + A = pyruvate + AH2. Its function is as follows. Catalyzes the conversion of L-lactate to pyruvate. Is coupled to the respiratory chain. In Serratia proteamaculans (strain 568), this protein is L-lactate dehydrogenase.